Reading from the N-terminus, the 982-residue chain is Zinc finger and BTB domain-containing protein 4 (982 aa).

The 102-residue stretch at 30 to 131 folds into the BTB domain; sequence CDVTLIAGDT…IYSARLALPG (102 aa). Lysine 40 participates in a covalent cross-link: Glycyl lysine isopeptide (Lys-Gly) (interchain with G-Cter in SUMO2). Residues 71–103 are disordered; sequence TGGSAPSPATTTAASSSSSSPPPASPHSSSPPR. Over residues 74–89 the composition is skewed to low complexity; the sequence is SAPSPATTTAASSSSS. The interaction with CBFA2T3 stretch occupies residues 165-324; it reads VPPAPTSMVT…CRYCEKVFAL (160 aa). The C2H2-type 1; atypical zinc finger occupies 210 to 232; it reads FPCPRCGKSFIHPKRLQTHEAQC. Residues 234 to 255 form a disordered region; that stretch reads RGSNTRGSAGLGPGVSGSGGPA. Residues 242–255 show a composition bias toward gly residues; the sequence is AGLGPGVSGSGGPA. C2H2-type zinc fingers lie at residues 285–307, 313–335, and 341–364; these read YVCA…SNVH, YPCR…EVWH, and YQCI…RAFH. At serine 367 the chain carries Phosphoserine. The segment at 404 to 578 is disordered; that stretch reads KTYSQGAPEA…QLQAPPPLCQ (175 aa). Positions 430-446 are enriched in pro residues; it reads SPQPLPPPAPEPGPPPS. Positions 467 to 477 are enriched in gly residues; that stretch reads AAGGGPAGTGG. Low complexity-rich tracts occupy residues 478–488 and 507–529; these read SQAASVITYTT and ATPT…ATAT. A Glycyl lysine isopeptide (Lys-Gly) (interchain with G-Cter in SUMO2) cross-link involves residue lysine 548. Gly residues predominate over residues 552–565; sequence GLSGSGGSPTGTGR. A Glycyl lysine isopeptide (Lys-Gly) (interchain with G-Cter in SUMO2) cross-link involves residue lysine 590. A compositionally biased stretch (basic and acidic residues) spans 591–600; the sequence is RRISETDLRP. Disordered stretches follow at residues 591-700, 715-738, 759-839, and 854-880; these read RRIS…ERRH, LRKH…SSTR, QRHA…GGGS, and GGSR…GDRM. Residues 604–627 show a composition bias toward acidic residues; it reads SGEEVEESEEEEEEEEEEDQEEQE. The segment covering 628–637 has biased composition (basic and acidic residues); sequence ESKAGGEDQL. C2H2-type zinc fingers lie at residues 700–722 and 739–761; these read HRCG…QEAH and FTCP…GQRH. 2 positions are modified to phosphothreonine; by HIPK2: threonine 769 and threonine 771. Low complexity predominate over residues 799-820; that stretch reads SSSSGEAGSGSAAAAEASESAS. Residue threonine 953 is modified to Phosphothreonine; by HIPK2.

Interacts with HIPK2. Interacts with CBFA2T3. Interacts with ZBTB38. In terms of processing, phosphorylated by HIPK2. This phosphorylation reduces stability and triggers ZBTB4 protein degradation in response to DNA damage. As to expression, expressed in adult and aged myogenic satellite cells.

It localises to the nucleus. The protein localises to the chromosome. Functionally, transcriptional repressor with bimodal DNA-binding specificity. Represses transcription in a methyl-CpG-dependent manner. Binds with a higher affinity to methylated CpG dinucleotides in the consensus sequence 5'-CGCG-3' but can also bind to the non-methylated consensus sequence 5'-CTGCNA-3' also known as the consensus kaiso binding site (KBS). Can also bind specifically to a single methyl-CpG pair and can bind hemimethylated DNA but with a lower affinity compared to methylated DNA. Plays a role in postnatal myogenesis, may be involved in the regulation of satellite cells self-renewal. The protein is Zinc finger and BTB domain-containing protein 4 (Zbtb4) of Mus musculus (Mouse).